The primary structure comprises 349 residues: Phloroglucinol synthase (349 aa).

C138 is a catalytic residue.

The protein belongs to the thiolase-like superfamily. Chalcone/stilbene synthases family.

The catalysed reaction is 3 malonyl-CoA + 3 H(+) = 1,3,5-trihydroxybenzene + 3 CO2 + 3 CoA. It functions in the pathway antibiotic biosynthesis. Type III polyketide synthase that catalyzes the synthesis of phloroglucinol from three molecules of malonyl-CoA. In addition to its ability to produce phloroglucinol from malonyl-CoA, it exhibits broad substrate specificity, accepting C4-C12 aliphatic acyl-CoAs and phenylacetyl-CoA as the starters to form C6-polyoxoalkylated alpha-pyrones from sequential condensation with malonyl-CoA. This Pseudomonas fluorescens (strain ATCC BAA-477 / NRRL B-23932 / Pf-5) protein is Phloroglucinol synthase.